Here is a 247-residue protein sequence, read N- to C-terminus: UPF0259 membrane protein BU276 (247 aa).

A run of 6 helical transmembrane segments spans residues 20-40 (IGAI…IDMF), 85-105 (IMES…LISV), 114-134 (IVSS…LNFL), 137-157 (FIIQ…SIIL), 188-208 (IIGP…MLLA), and 218-238 (LFLI…IYLF).

The protein belongs to the UPF0259 family.

Its subcellular location is the cell membrane. This Buchnera aphidicola subsp. Acyrthosiphon pisum (strain APS) (Acyrthosiphon pisum symbiotic bacterium) protein is UPF0259 membrane protein BU276.